A 155-amino-acid polypeptide reads, in one-letter code: Small ribosomal subunit protein uS7 (155 aa).

This sequence belongs to the universal ribosomal protein uS7 family. As to quaternary structure, part of the 30S ribosomal subunit. Contacts proteins S9 and S11.

Functionally, one of the primary rRNA binding proteins, it binds directly to 16S rRNA where it nucleates assembly of the head domain of the 30S subunit. Is located at the subunit interface close to the decoding center, probably blocks exit of the E-site tRNA. This is Small ribosomal subunit protein uS7 from Pelodictyon phaeoclathratiforme (strain DSM 5477 / BU-1).